The sequence spans 441 residues: Enolase (441 aa).

Q163 serves as a coordination point for (2R)-2-phosphoglycerate. E205 functions as the Proton donor in the catalytic mechanism. Positions 242, 288, and 315 each coordinate Mg(2+). Positions 340, 369, 370, and 391 each coordinate (2R)-2-phosphoglycerate. Residue K340 is the Proton acceptor of the active site.

The protein belongs to the enolase family. The cofactor is Mg(2+).

The protein resides in the cytoplasm. The protein localises to the secreted. It localises to the cell surface. The enzyme catalyses (2R)-2-phosphoglycerate = phosphoenolpyruvate + H2O. It functions in the pathway carbohydrate degradation; glycolysis; pyruvate from D-glyceraldehyde 3-phosphate: step 4/5. In terms of biological role, catalyzes the reversible conversion of 2-phosphoglycerate (2-PG) into phosphoenolpyruvate (PEP). It is essential for the degradation of carbohydrates via glycolysis. In Ligilactobacillus salivarius (strain UCC118) (Lactobacillus salivarius), this protein is Enolase.